The primary structure comprises 426 residues: Growth-regulating factor 9 (426 aa).

Residues 92-127 form the QLQ domain; the sequence is PFTPSQWMELEHQALIYKYLNAKAPIPSSLLISISK. The WRC domain maps to 151–195; it reads DPEPGRCRRTDGKKWRCSKEAMADHKYCERHINRNRHRSRKPVEN. 2 consecutive short sequence motifs (bipartite nuclear localization signal) follow at residues 156 to 166 and 184 to 191; these read RCRRTDGKKWR and RNRHRSRK. The interval 184 to 222 is disordered; the sequence is RNRHRSRKPVENQSRKTVKETPCAGSLPSSVGQGSFKKA. A compositionally biased stretch (basic and acidic residues) spans 191-202; it reads KPVENQSRKTVK.

Belongs to the GRF family.

It localises to the nucleus. Its function is as follows. Transcription activator that plays a regulatory role in gibberellin-induced stem elongation. This Oryza sativa subsp. japonica (Rice) protein is Growth-regulating factor 9 (GRF9).